The sequence spans 1028 residues: MPPRRDLKKILIIGSGPITIGQAAEFDYSGTQAVKALRGAGYRVVLVNSNPATIMTDPELAERTYIEPLDLEHLEGILAREAPDALLPTLGGQTGLNLAMALYEEGILQKYGVELIGAKAEAIRKGEDREAFQEAMRRIDLEVPRGQLVGSVEEGLHFAREVGFPVVVRPSFTLGGTGGGIAHDEAELVEVLSRGLTLSPVHTALVEESVLGWKEFELEVMRDHADTVVIITSIENVDPMGVHTGDSITVAPAQTLSDVEYQRMRDAAKAIIREIGVETGGSNIQFAVDPKTGRQVVIEMNPRVSRSSALASKATGFPIAKIAALLAVGYRLDELPNDITRKTPASFEPTIDYVVVKIPRFAFEKFRPLRNTLGELKDELTTQMKSVGEVMAIGRTFKEALMKALRGLERDVRALAGVRTEELEKKLYPNPDRVYAVMELLRRGMPVEELYQATRIDPWFLHQMKEIVEAEEWLKTHPPKDREDWRFYKGLGLTDRRIGELLGKGEKEVRAERKALGVVPVYKTVDTCAAEFEAYTPYHYSTYELEDEVWPSQKPKVVILGSGPIRIGQGVEFDYATVHAVWALKEAGFETIMVNSNPETVSTDYDTADRLYFEPLTLEDVLNIVEHEKPIGVIATLGGQTPLKLAKGLEEAGVRLLGTPFSAIHQAEDREAFHALCQRLGIPQPEGRVAQSPEEALRLAPEVGFPLLVRPSYVLGGRAMQVVRDEGELKRYLEEVYAPLEERPSILLDRFLEGAIELDVDALSDGQEVMVAGIMEHVERAGVHSGDSATLLPPVHVPEEALKKVRDYTRRLALTLGVRGLLNVQYAVVGEEVYVLEANPRASRTVPFVSKAIGVPLAKLAALIAVGKTLKELGVRDLDPVPPYYAAKEVVIPWIKFPGVIPELGPEMRSTGESMGIDQDPYLAYYKAELGAGQRLPLSGQVRFIGEGLEDLKALYQEAGFALTEGQDYDLLISLVPDPELRRAVERGLPFITTREGAWWSLKAILRARESGLRVQSLQDWHQKAPRG.

Positions 1–409 are carboxyphosphate synthetic domain; the sequence is MPPRRDLKKI…ALMKALRGLE (409 aa). Residues Arg-129, Arg-169, Gly-175, Gly-176, Glu-208, Val-210, Glu-215, Gly-241, Val-242, His-243, Gln-285, and Glu-299 each coordinate ATP. Residues 133-328 enclose the ATP-grasp 1 domain; that stretch reads QEAMRRIDLE…IAKIAALLAV (196 aa). Gln-285, Glu-299, and Asn-301 together coordinate Mg(2+). Residues Gln-285, Glu-299, and Asn-301 each contribute to the Mn(2+) site. The oligomerization domain stretch occupies residues 410–549; it reads RDVRALAGVR…YSTYELEDEV (140 aa). Positions 550–933 are carbamoyl phosphate synthetic domain; the sequence is WPSQKPKVVI…AYYKAELGAG (384 aa). An ATP-grasp 2 domain is found at 674 to 866; sequence HALCQRLGIP…LAKLAALIAV (193 aa). Positions 710, 750, 752, 757, 782, 783, 784, 785, 825, and 837 each coordinate ATP. 3 residues coordinate Mg(2+): Gln-825, Glu-837, and Asn-839. Residues Gln-825, Glu-837, and Asn-839 each coordinate Mn(2+). The MGS-like domain occupies 934-1028; that stretch reads QRLPLSGQVR…QDWHQKAPRG (95 aa). The tract at residues 934–1028 is allosteric domain; the sequence is QRLPLSGQVR…QDWHQKAPRG (95 aa).

Belongs to the CarB family. In terms of assembly, composed of two chains; the small (or glutamine) chain promotes the hydrolysis of glutamine to ammonia, which is used by the large (or ammonia) chain to synthesize carbamoyl phosphate. Tetramer of heterodimers (alpha,beta)4. The cofactor is Mg(2+). It depends on Mn(2+) as a cofactor.

It catalyses the reaction hydrogencarbonate + L-glutamine + 2 ATP + H2O = carbamoyl phosphate + L-glutamate + 2 ADP + phosphate + 2 H(+). It carries out the reaction hydrogencarbonate + NH4(+) + 2 ATP = carbamoyl phosphate + 2 ADP + phosphate + 2 H(+). Its pathway is amino-acid biosynthesis; L-arginine biosynthesis; carbamoyl phosphate from bicarbonate: step 1/1. The protein operates within pyrimidine metabolism; UMP biosynthesis via de novo pathway; (S)-dihydroorotate from bicarbonate: step 1/3. Large subunit of the glutamine-dependent carbamoyl phosphate synthetase (CPSase). CPSase catalyzes the formation of carbamoyl phosphate from the ammonia moiety of glutamine, carbonate, and phosphate donated by ATP, constituting the first step of 2 biosynthetic pathways, one leading to arginine and/or urea and the other to pyrimidine nucleotides. The large subunit (synthetase) binds the substrates ammonia (free or transferred from glutamine from the small subunit), hydrogencarbonate and ATP and carries out an ATP-coupled ligase reaction, activating hydrogencarbonate by forming carboxy phosphate which reacts with ammonia to form carbamoyl phosphate. The protein is Carbamoyl phosphate synthase large chain of Thermus thermophilus (strain ATCC BAA-163 / DSM 7039 / HB27).